The following is a 591-amino-acid chain: ADP-ribosylating toxin CARDS (591 aa).

The segment at 1–205 is mono-ADP ribosyltransferase (mART) domain; that stretch reads MPNPVRFVYR…LPTPGIATPV (205 aa). Positions 206–256 are NAD(+)-binding pocket; sequence HLSIPQAASVADVSEGTSASLSFACPDWSPPSSNGENPLDKCIAEKIDNYN. Residues cysteine 230 and cysteine 247 are joined by a disulfide bond. A KELED motif, involved in host ER trafficking, solvent exposed in the crystal structure motif is present at residues 268 to 272; it reads KELED. A D2 domain region spans residues 273–439; it reads TPVYLRGIKT…QFVTMRAAST (167 aa). A D3 domain region spans residues 440-591; that stretch reads FFVDVQLGWY…ILVKDGFDRF (152 aa).

This sequence belongs to the bacterial exotoxin subunit A family. Monomer. Binds to host (human) pulmonary surfactant-associated protein A1 (SFTPA1), the major mammalian protein component of pulmonary surfactant. Binds to host (human) surface annexin A2 (ANXA2) on the cell surface; anti-ANXA2 antibodies decrease binding to cells. Interacts with cytosolic host (human) NLRP3, which it ADP-ribosylates in vitro. 8 hours after treatment of HeLa cells with purified protein, a substantial amount is processed to 2 nearly equal-sized fragments. The disulfide bond between Cys-230 and Cys-247 is required to for the toxin to exert its mART and vacuolating activities within target cells, and for protein processing. Acidic pH in the endosome and retrograde transport are required for toxin cleavage, which is required for both toxin activities. Trypsin treatment under mild conditions leads to cleavage at Lys-305 and Lys-307; the 2 proteins fragments remain associated and can be internalized and vacuolate HeLa cells.

Its subcellular location is the cell membrane. It is found in the cytoplasm. It localises to the cell surface. The protein localises to the cell projection. The protein resides in the attachment organelle. Its subcellular location is the host cytoplasm. It is found in the host cytosol. It localises to the host endoplasmic reticulum. With respect to regulation, in vitro ADP-ribosylation is enhanced by dithiotheritol. Functionally, the main virulence factor for this bacteria, a mono-ADP-ribosylating toxin (mART), that transfers the ADP-ribosyl group from NAD(+) to multiple target proteins in vitro. Also elicits cytopathic effects in mammalian cells, such as disorganization and disruption of respiratory epithelial integrity in tracheal epithelium and vacuolization in the cytoplasm of CHO and HeLa cells as well as in mice and baboons. Treatment of mice or baboons with CARDS elicits a response that is consistent with human M.pneumoniae infections and mouse models of both infection and intoxication, suggesting that CARDS toxin is sufficient to cause prolonged inflammatory responses and airway dysfunction. Treatment of baboons with CARDS induces a number of cytokines; G-CSF (40 fold), IL-1Ra (10 fold), IL-6 and IL-8 (333 and 100 fold, respectively), MIP-1a (5 fold), and RANTES (9 fold). Treatment of mice gives a similar response. Binds phosphatidyl choline, dipalmitoylphosphatidylcholine (DPPC) and sphingomyelin via domains D2 plus D3. Its function is as follows. Has at least 2 host receptors SFTPA1 and ANXA2. Internalized by a clathrin-mediated process; protein is rapidly taken up at 37 degrees Celsius. Clathrin-independent or caveolin-dependent endocytosis were not detected. In HeLa cells internalized CARDS trafficks toward the nucleus by retrograde transport from early to late endosomes, then the Golgi apparatus; at 16 hours most toxin is concentrated in the perinuclear region in the host endoplasmic reticulum (ER). Failure to localize to the host ER prevents ADP-ribosylation and vacuolization. An acidic compartment is required to mediate retrotransport and processing of toxin into an N-terminal fragment with mART activity and a C-terminal fragment that is able to induce vacuolization. In terms of biological role, induces the host NLRP3 inflammasome to release interleukin-1 beta (IL-1 beta); IL-1 beta release requires ADP-ribosylation activity and uptake by host macrophages. In the host colocalizes with the NLRP3 inflammasome; ADP-ribosylates NLRP3 in vitro. ADP-ribosylation of NLRP3 may lead to hyperinflammation. This chain is ADP-ribosylating toxin CARDS, found in Mycoplasma pneumoniae (strain ATCC 29342 / M129 / Subtype 1) (Mycoplasmoides pneumoniae).